Here is a 398-residue protein sequence, read N- to C-terminus: Acetate kinase 1 (398 aa).

Asn-9 serves as a coordination point for Mg(2+). ATP is bound at residue Lys-16. Arg-89 contacts substrate. Residue Asp-146 is the Proton donor/acceptor of the active site. ATP-binding positions include 206–210 (HLGNG), 281–283 (DCR), and 329–333 (GIGEN). Glu-384 provides a ligand contact to Mg(2+).

Belongs to the acetokinase family. As to quaternary structure, homodimer. Mg(2+) serves as cofactor. It depends on Mn(2+) as a cofactor.

Its subcellular location is the cytoplasm. It catalyses the reaction acetate + ATP = acetyl phosphate + ADP. Its pathway is metabolic intermediate biosynthesis; acetyl-CoA biosynthesis; acetyl-CoA from acetate: step 1/2. Catalyzes the formation of acetyl phosphate from acetate and ATP. Can also catalyze the reverse reaction. The polypeptide is Acetate kinase 1 (Photobacterium profundum (strain SS9)).